We begin with the raw amino-acid sequence, 585 residues long: Putative ABC transporter ATP-binding protein MG187 (585 aa).

One can recognise an ABC transporter domain in the interval 8–468; that stretch reads IELKNIVVDF…PANEFVARFL (461 aa). Position 40–47 (40–47) interacts with ATP; sequence GPSGCGKT.

Belongs to the ABC transporter superfamily.

The protein is Putative ABC transporter ATP-binding protein MG187 of Mycoplasma genitalium (strain ATCC 33530 / DSM 19775 / NCTC 10195 / G37) (Mycoplasmoides genitalium).